Consider the following 987-residue polypeptide: MASPPPFDICGDLDDDPTPPAPTPLAAPTPNGLNDRLLRLTRTHQRGPSQNPNPNPNPNPKPPPPPPPQEPEPAKVKLAGRRRLCKLSTAGDESAGDDDSIRDILDDLTTRLDSLSVDRPTARPRPHVSPLPCALHADPDPSQSQLNDGTKPSSSFVDCDDDDDDAGGAYGGFGVKEEVTRKVFKASSSFGGRGNDDKMKAKGAYAFDTVSRKTTTESKASKFFGDYDDEDDIDQDAENGKENHADDVGWEKTEDFKMEPTGTGVTRKPYNLPGRIFNMLYPHQREGLRWLWVLHCRGTGGILGDDMGLGKTMQVSAFLAGLFHSRLIKRVLVVAPKTLLTHWTKELSVVSLKDKIRDYSGPNANARNYELKYAFKEGGILLTTYDIVRNNFKMIKGNFTNDFDDEEETLWNYVILDEGHIIKNPKTQRAQSLFEIPCAHRIVISGTPIQNNLKEMWALFYFCCPEVLGDKEQFKARYEHAIIQGNDKNATNRQKHIGSNVAKELRERIKPYFLRRMKNEVFLDSGTGEDKKLAKKNELIIWLKLTSCQRQLYEAFLNSELVHSSMQGSPLAAITILKKICDHPLLLTKKAAEGVLEGMDAMLNNQEMGMVEKMAMNLADMAHDDDDVELQVGQDVSCKLSFMMSLLQNLVSEGHNVLIFSQTRKMLNIIQEAIILEGYKFLRIDGTTKISERERIVKDFQEGPGAPIFLLTTQVGGLGLTLTKAARVIVVDPAWNPSTDNQSVDRAYRIGQMKDVIVYRLMTSGTIEEKIYKLQVFKGALFRTATEHKEQTRYFSKRDIQELFSLPEQGFDVSLTQKQLQEEHGQQLVMDDSLRKHIQFLEQQGIAGVSHHSLLFSKTAILPTLNDNDGLDSRRAMPMAKHYYKGASSDYVANGAAYAMKPKEFIARTYSPNSTSTESPEEIKAKINRLSQTLANTVLVAKLPDRGDKIRRQINELDEKLTVIESSPEPLERKGPTEVICLDDLSV.

Disordered stretches follow at residues 1–172 (MASP…AYGG) and 224–245 (FGDY…ENHA). 2 stretches are compositionally biased toward pro residues: residues 18-27 (TPPAPTPLAA) and 51-71 (NPNP…PQEP). Residues 99 to 110 (DSIRDILDDLTT) show a composition bias toward basic and acidic residues. A compositionally biased stretch (polar residues) spans 141–156 (PSQSQLNDGTKPSSSF). The span at 226-237 (DYDDEDDIDQDA) shows a compositional bias: acidic residues. One can recognise a Helicase ATP-binding domain in the interval 292–466 (WVLHCRGTGG…WALFYFCCPE (175 aa)). 305 to 312 (DDMGLGKT) is an ATP binding site. The DEAH box motif lies at 417–420 (DEGH). The Helicase C-terminal domain maps to 645–801 (SLLQNLVSEG…TRYFSKRDIQ (157 aa)).

The protein belongs to the SNF2/RAD54 helicase family. In terms of tissue distribution, expressed in ovaries, roots, shoots and leaves.

It localises to the cytoplasm. It is found in the chromosome. DNA helicase that acts as an essential component of the spindle assembly checkpoint. Plays an indispensable role in the development of seed endosperm. Is required to secure sister chromosome separation during endosperm syncytial mitosis, which involves extremely rapid free nuclear cycles. This is SNF2 domain-containing protein ENL1 from Oryza sativa subsp. japonica (Rice).